The sequence spans 883 residues: HTH-type transcriptional regulator AlkS (883 aa).

The HTH luxR-type domain maps to 816-881; that stretch reads ENKAGDFLTL…QAIIEAERQG (66 aa). A DNA-binding region (H-T-H motif) is located at residues 840-859; sequence NKQIATKMYVTEDAIKWHMR.

It functions in the pathway hydrocarbon metabolism; alkane degradation. Its function is as follows. May act as a transcriptional regulator of AlkB. This Pseudomonas putida (Arthrobacter siderocapsulatus) protein is HTH-type transcriptional regulator AlkS (alkS).